A 240-amino-acid chain; its full sequence is UDP-2,3-diacylglucosamine hydrolase (240 aa).

Residues Asp-7, His-9, Asp-40, Asn-78, and His-113 each contribute to the Mn(2+) site. A substrate-binding site is contributed by 78-79 (NR). Positions 121, 159, 163, 166, and 194 each coordinate substrate. Mn(2+) is bound by residues His-194 and His-196.

Belongs to the LpxH family. Mn(2+) is required as a cofactor.

Its subcellular location is the cell inner membrane. The enzyme catalyses UDP-2-N,3-O-bis[(3R)-3-hydroxytetradecanoyl]-alpha-D-glucosamine + H2O = 2-N,3-O-bis[(3R)-3-hydroxytetradecanoyl]-alpha-D-glucosaminyl 1-phosphate + UMP + 2 H(+). It participates in glycolipid biosynthesis; lipid IV(A) biosynthesis; lipid IV(A) from (3R)-3-hydroxytetradecanoyl-[acyl-carrier-protein] and UDP-N-acetyl-alpha-D-glucosamine: step 4/6. In terms of biological role, hydrolyzes the pyrophosphate bond of UDP-2,3-diacylglucosamine to yield 2,3-diacylglucosamine 1-phosphate (lipid X) and UMP by catalyzing the attack of water at the alpha-P atom. Involved in the biosynthesis of lipid A, a phosphorylated glycolipid that anchors the lipopolysaccharide to the outer membrane of the cell. This is UDP-2,3-diacylglucosamine hydrolase from Pseudomonas entomophila (strain L48).